The following is a 167-amino-acid chain: Peptide deformylase (167 aa).

Residues Cys-91 and His-133 each contribute to the Fe cation site. Glu-134 is a catalytic residue. His-137 serves as a coordination point for Fe cation.

The protein belongs to the polypeptide deformylase family. Fe(2+) is required as a cofactor.

The catalysed reaction is N-terminal N-formyl-L-methionyl-[peptide] + H2O = N-terminal L-methionyl-[peptide] + formate. In terms of biological role, removes the formyl group from the N-terminal Met of newly synthesized proteins. Requires at least a dipeptide for an efficient rate of reaction. N-terminal L-methionine is a prerequisite for activity but the enzyme has broad specificity at other positions. The polypeptide is Peptide deformylase (Tolumonas auensis (strain DSM 9187 / NBRC 110442 / TA 4)).